A 304-amino-acid chain; its full sequence is Glycine--tRNA ligase alpha subunit (304 aa).

Belongs to the class-II aminoacyl-tRNA synthetase family. In terms of assembly, tetramer of two alpha and two beta subunits.

Its subcellular location is the cytoplasm. The catalysed reaction is tRNA(Gly) + glycine + ATP = glycyl-tRNA(Gly) + AMP + diphosphate. The sequence is that of Glycine--tRNA ligase alpha subunit from Serratia proteamaculans (strain 568).